The sequence spans 394 residues: Elongation factor Tu (394 aa).

In terms of domain architecture, tr-type G spans Lys10–Val204. A G1 region spans residues Gly19–Thr26. Residue Gly19 to Thr26 participates in GTP binding. Thr26 is a binding site for Mg(2+). A G2 region spans residues Gly60–Ser64. Residues Asp81 to Gly84 are G3. GTP-binding positions include Asp81–His85 and Asn136–Asp139. Positions Asn136–Asp139 are G4. Positions Ser174–Leu176 are G5.

Belongs to the TRAFAC class translation factor GTPase superfamily. Classic translation factor GTPase family. EF-Tu/EF-1A subfamily. As to quaternary structure, monomer.

Its subcellular location is the cytoplasm. It catalyses the reaction GTP + H2O = GDP + phosphate + H(+). GTP hydrolase that promotes the GTP-dependent binding of aminoacyl-tRNA to the A-site of ribosomes during protein biosynthesis. The sequence is that of Elongation factor Tu from Rickettsia conorii (strain ATCC VR-613 / Malish 7).